A 678-amino-acid chain; its full sequence is Zinc finger translocation-associated protein (678 aa).

4 disordered regions span residues 1–100, 182–250, 329–417, and 490–583; these read MEPG…PGRD, LGVQ…GSRG, QPEA…HRRH, and LGPP…NYQP. Residues 62–78 are compositionally biased toward low complexity; the sequence is SAPLPSSRARGPASSGR. Residues 79-88 show a composition bias toward basic and acidic residues; sequence KYSDHCEARA. Residues 187–201 show a composition bias toward acidic residues; it reads AEEEEEEEEEEEEEG. K375 participates in a covalent cross-link: Glycyl lysine isopeptide (Lys-Gly) (interchain with G-Cter in SUMO2). Residues 388–398 are compositionally biased toward acidic residues; sequence AEEEEELEEGE. Positions 492–504 are enriched in pro residues; that stretch reads PPRPESPQGPIPP. Composition is skewed to acidic residues over residues 513–529 and 543–553; these read GGGDEEEEPEEEEEEWG and AEEEEDEEDGQ. Residues 560 to 572 are compositionally biased toward pro residues; the sequence is LPPPPPPPPPPPP. The span at 573 to 583 shows a compositional bias: basic and acidic residues; it reads RSREQRRNYQP.

This chain is Zinc finger translocation-associated protein, found in Homo sapiens (Human).